The primary structure comprises 386 residues: PqqA peptide cyclase (386 aa).

The Radical SAM core domain maps to 9 to 228 (SKPPLWLLAE…RQYIDQHHLK (220 aa)). Residues Cys-23, Cys-27, and Cys-30 each coordinate [4Fe-4S] cluster.

It belongs to the radical SAM superfamily. PqqE family. In terms of assembly, interacts with PqqD. The interaction is necessary for activity of PqqE. It depends on [4Fe-4S] cluster as a cofactor.

The catalysed reaction is [PQQ precursor protein] + S-adenosyl-L-methionine = E-Y cross-linked-[PQQ precursor protein] + 5'-deoxyadenosine + L-methionine + H(+). It participates in cofactor biosynthesis; pyrroloquinoline quinone biosynthesis. Its function is as follows. Catalyzes the cross-linking of a glutamate residue and a tyrosine residue in the PqqA protein as part of the biosynthesis of pyrroloquinoline quinone (PQQ). This Acinetobacter baylyi (strain ATCC 33305 / BD413 / ADP1) protein is PqqA peptide cyclase.